We begin with the raw amino-acid sequence, 240 residues long: Serine protease SplB (240 aa).

The N-terminal stretch at 1-36 (MNKNVVIKSLATLTILTSVAGIGTTLVEEVQQTAKA) is a signal peptide. Residues H75, D113, and S193 each act as charge relay system in the active site.

The protein belongs to the peptidase S1B family.

It localises to the secreted. Functionally, serine protease that cleaves specifically after the sequence Trp-Glu-Leu-Gln. This is Serine protease SplB (splB) from Staphylococcus aureus (strain bovine RF122 / ET3-1).